Here is a 360-residue protein sequence, read N- to C-terminus: 3-isopropylmalate dehydrogenase (360 aa).

Position 76 to 89 (76 to 89 (GPKWEPLDYSLRPE)) interacts with NAD(+). Residues R96, R106, R134, and D224 each coordinate substrate. Residues D224, D248, and D252 each coordinate Mg(2+). Residue 282–294 (GSAPDIAGRGIAN) coordinates NAD(+).

The protein belongs to the isocitrate and isopropylmalate dehydrogenases family. LeuB type 1 subfamily. In terms of assembly, homodimer. Mg(2+) serves as cofactor. Mn(2+) is required as a cofactor.

Its subcellular location is the cytoplasm. It carries out the reaction (2R,3S)-3-isopropylmalate + NAD(+) = 4-methyl-2-oxopentanoate + CO2 + NADH. It participates in amino-acid biosynthesis; L-leucine biosynthesis; L-leucine from 3-methyl-2-oxobutanoate: step 3/4. Its function is as follows. Catalyzes the oxidation of 3-carboxy-2-hydroxy-4-methylpentanoate (3-isopropylmalate) to 3-carboxy-4-methyl-2-oxopentanoate. The product decarboxylates to 4-methyl-2 oxopentanoate. This Methylococcus capsulatus (strain ATCC 33009 / NCIMB 11132 / Bath) protein is 3-isopropylmalate dehydrogenase.